An 834-amino-acid polypeptide reads, in one-letter code: Mannosyl-oligosaccharide glucosidase (834 aa).

Residues 1–10 (MARGERRRRA) are compositionally biased toward basic residues. The tract at residues 1–37 (MARGERRRRAAAAEGARPLERARAAGRRDGRAGGARG) is disordered. The Cytoplasmic segment spans residues 1 to 43 (MARGERRRRAAAAEGARPLERARAAGRRDGRAGGARGSASGAA). The Endoplasmic reticulum targeting signature appears at 3 to 9 (RGERRRR). The segment covering 17–31 (RPLERARAAGRRDGR) has biased composition (basic and acidic residues). Residues 44–64 (LAVVVLALAFGLSGRWVLAWL) traverse the membrane as a helical; Signal-anchor for type II membrane protein segment. The Lumenal segment spans residues 65 to 834 (RVRRALTLHP…LVLLIMAEEY (770 aa)). Positions 74 to 136 (PAPSALPPDS…GTPPKLRHTC (63 aa)) are required for endoplasmic reticulum targeting. The Proton donor role is filled by Asp-580. N-linked (GlcNAc...) asparagine glycosylation is present at Asn-654. Catalysis depends on Glu-804, which acts as the Proton acceptor.

It belongs to the glycosyl hydrolase 63 family.

It is found in the endoplasmic reticulum membrane. The enzyme catalyses N(4)-(alpha-D-Glc-(1-&gt;2)-alpha-D-Glc-(1-&gt;3)-alpha-D-Glc-(1-&gt;3)-alpha-D-Man-(1-&gt;2)-alpha-D-Man-(1-&gt;2)-alpha-D-Man-(1-&gt;3)-[alpha-D-Man-(1-&gt;2)-alpha-D-Man-(1-&gt;3)-[alpha-D-Man-(1-&gt;2)-alpha-D-Man-(1-&gt;6)]-alpha-D-Man-(1-&gt;6)]-beta-D-Man-(1-&gt;4)-beta-D-GlcNAc-(1-&gt;4)-beta-D-GlcNAc)-L-asparaginyl-[protein] + H2O = N(4)-(alpha-D-Glc-(1-&gt;3)-alpha-D-Glc-(1-&gt;3)-alpha-D-Man-(1-&gt;2)-alpha-D-Man-(1-&gt;2)-alpha-D-Man-(1-&gt;3)-[alpha-D-Man-(1-&gt;2)-alpha-D-Man-(1-&gt;3)-[alpha-D-Man-(1-&gt;2)-alpha-D-Man-(1-&gt;6)]-alpha-D-Man-(1-&gt;6)]-beta-D-Man-(1-&gt;4)-beta-D-GlcNAc-(1-&gt;4)-beta-D-GlcNAc)-L-asparaginyl-[protein] + beta-D-glucose. The protein operates within glycan metabolism; N-glycan degradation. Inhibited by the deoxynojirimycin derivative N-9'-Methoxynonyl-1-Deoxynojirimycin. Functionally, in the context of N-glycan degradation, cleaves the distal alpha 1,2-linked glucose residue from the Glc(3)Man(9)GlcNAc(2) oligosaccharide precursor in a highly specific manner. (Microbial infection) Required for successful influenza or dengue virus infection; inhibition of its activity by a deoxynojirimycin derivative prevents death in mice infected with lethal doses of influenza or dengue viruses, even when administrated after infection. This Mus musculus (Mouse) protein is Mannosyl-oligosaccharide glucosidase.